Consider the following 351-residue polypeptide: Protein-glutamate methylesterase/protein-glutamine glutaminase 1 (351 aa).

The region spanning 1–115 (MVDDSAVVRQ…KQFLTESADE (115 aa)) is the Response regulatory domain. Asp49 carries the post-translational modification 4-aspartylphosphate. One can recognise a CheB-type methylesterase domain in the interval 161–351 (AQTTERIVAI…MAREIVTQLQ (191 aa)). Active-site residues include Ser173, His199, and Asp295.

Belongs to the CheB family. Phosphorylated by CheA. Phosphorylation of the N-terminal regulatory domain activates the methylesterase activity.

The protein resides in the cytoplasm. The enzyme catalyses [protein]-L-glutamate 5-O-methyl ester + H2O = L-glutamyl-[protein] + methanol + H(+). It carries out the reaction L-glutaminyl-[protein] + H2O = L-glutamyl-[protein] + NH4(+). Involved in chemotaxis. Part of a chemotaxis signal transduction system that modulates chemotaxis in response to various stimuli. Catalyzes the demethylation of specific methylglutamate residues introduced into the chemoreceptors (methyl-accepting chemotaxis proteins or MCP) by CheR. Also mediates the irreversible deamidation of specific glutamine residues to glutamic acid. The sequence is that of Protein-glutamate methylesterase/protein-glutamine glutaminase 1 from Xanthomonas oryzae pv. oryzae (strain MAFF 311018).